Reading from the N-terminus, the 407-residue chain is Cation efflux system protein CusB (407 aa).

An N-terminal signal peptide occupies residues 1–28 (MKKIALIIGSMIAGGIISAAGFTWVAKA).

Belongs to the membrane fusion protein (MFP) (TC 8.A.1) family. As to quaternary structure, the cus efflux system is composed of CusA, CusB, CusC and CusF.

In terms of biological role, part of a cation efflux system that mediates resistance to copper and silver. The sequence is that of Cation efflux system protein CusB (cusB) from Escherichia coli (strain K12).